The primary structure comprises 1345 residues: Membrane-anchored lipid-binding protein LAM4 (1345 aa).

Topologically, residues 1-1197 (MTRDSKKKHH…NFSSEIFMNK (1197 aa)) are cytoplasmic. Disordered regions lie at residues 51–80 (RVGGNPDIPSLLKPETFTESPAKGSQKAAA), 115–134 (SLKGRFQDGNSNSNSVPSLS), 139–164 (EKEKLQSGKREGSSNQAEEKTPDGHD), 190–302 (DADN…SLDD), 356–397 (LPEA…KPRR), 425–447 (SFNSSNGLTNNDPEYEDREPREM), and 489–531 (STII…NGRQ). Threonine 66 carries the phosphothreonine modification. The span at 216-228 (SENSTNNKNTSST) shows a compositional bias: low complexity. The span at 246–271 (SKSSTPSNQQLNTTEAGSKSKPSSLS) shows a compositional bias: polar residues. Low complexity predominate over residues 283–294 (HSNSHSSSNAIS). Residues 425–436 (SFNSSNGLTNND) show a composition bias toward polar residues. The span at 498–516 (SNGRPSSGLRRSSSKSFSS) shows a compositional bias: low complexity. A GRAM domain is found at 549 to 616 (EFHAIFKDSG…FKTIVQIEKR (68 aa)). A compositionally biased stretch (low complexity) spans 665–677 (SNSNNTNSSSNSI). Residues 665–722 (SNSNNTNSSSNSISDDENDDYDDDYDDYGDDDDDLYDNSNNISDSTDMTSSVSIGKPE) form a disordered region. Residues 678–700 (SDDENDDYDDDYDDYGDDDDDLY) show a composition bias toward acidic residues. A Phosphoserine modification is found at serine 747. 2 VASt domains span residues 758–930 (NEKL…TRSA) and 967–1139 (DDSI…SRAK). Positions 930 to 963 (ATKRKRSSKENTVTVSTLPKMEPSSHAPTEPDIQ) are disordered. Over residues 1141–1158 (KKPVKKVMKSHDKHRPFH) the composition is skewed to basic residues. The disordered stretch occupies residues 1141–1172 (KKPVKKVMKSHDKHRPFHSKVEQKSSESRKSD). A compositionally biased stretch (basic and acidic residues) spans 1159–1172 (SKVEQKSSESRKSD). The helical transmembrane segment at 1198-1218 (LLSPQKLFLILGLTIMLFWSP) threads the bilayer. Residues 1219 to 1345 (RLHVFQEKNN…NIERDANDLS (127 aa)) are Lumenal-facing.

It belongs to the YSP2 family.

The protein resides in the endoplasmic reticulum membrane. In terms of biological role, may be involved in sterol transfer between intracellular membranes. The sequence is that of Membrane-anchored lipid-binding protein LAM4 from Saccharomyces cerevisiae (strain ATCC 204508 / S288c) (Baker's yeast).